A 3677-amino-acid polypeptide reads, in one-letter code: MLWWEEVEDCYEREDVQKKTFTKWINAQFSKFGKQHIDNLFSDLQDGKRLLDLLEGLTGQKLPKEKGSTRVHALNNVNKALQVLQKNNVDLVNIGSTDIVDGNHKLTLGLIWNIILHWQVKNVMKTIMAGLQQTNSEKILLSWVRESTRNYPQVNVLNFTSSWSDGLALNALIHSHRPDLFDWNSVVSQQSATQRLEHAFNIAKCQLGIEKLLDPEDVATTYPDKKSILMYITSLFQVLPQQVSIEAIREVEMLPRPSKVTREEHFQLHHQMHYSQQITVSLAQGYEQTSSSPKPRFKSYAFTQAAYVATSDSSQSPYPSQHLEAPGSKSFGSSLIETEVNLDSYQTALEEVLSWLLSAEDTLRAQGEISKDVEEVKEQFHAHEGFMMDLTSHQGLVGNVLQLGSRLVGKGKLTEDEETEVQEQMNLLNSRWECLRVASMEKQSNLHKVLMDLQNQKLKELDDWLTKTEERTKKMEEEPLGPDLEDLKCQVQQHKVLQEDLEQEQVRVNSLTHMVVVVDESSGDHATAALEEQLKVLGDRWANICKWTEDRWILLQDILLKWQRFTEEQCLFSKWLSEKEDAMKNIQTSGFEDQNEMVSSLQNISALKIDLEKKKQSMEKLSSLNQDLLSALKNKSVTQKMEMWMENFAQRWDNLTQKLEKSSAQISQAVTTTQPSLTQTTVMETVTMVTTREQIMVKHAQEELPPPPPQKKRQITVDSEIRKRLDVDITELHSWITRSEAVLQSSEFAVYRKEGNISDLKEKVNAIAREKAEKFRKLQDASRSAQALVEQMVNEGVNAESIRQASEQLNSRWTEFCQLLSERVNWLEYQNNIITFYNQLQQLEQMTTTAENLLKTQPTTLSEPTAIKSQLKICKDEVNRLSALQPQIERLKIQSLTLKEKGQGPMFLDADFVAFTNHFNYVFDGVRAREKELQTIFDTLPPMRYQETMSSIRTWIQQSENKLSIPHLSVTEYEIMEERLGKLQALQSSLKEQQNGFNYLNATVKEIAKKAPSEISQKYQSEFEEVEGRWKKLSTQLVEHCQKLEEHMNKLRKFQNHKKTLQKWMAEVDVFLKEEWPALGDAEILKKQLKQCRLLVGDIQTIQPSLNSVNEGGQKIKSEAEFEFASRLEKELKELNTQWDHICRQVYTRKEALKAGLDKTVSLQKDLSEMHEWMTQAEEEYLERDFEYKTPDELQTAVEEMKRAKEEALQKEAKVKLLTETVNSVISQAPPAAQEALKKELETLTTNYQWLCTRLNGKCKTLEEVWACWHELLSYLEKANKWLNEVELKLKATENVPAGAEEITEVLESLENLMHHSEENPNQIRLLAQTLTDGGVMDELINEELETFNSRWRELHEEAVRKQKLLEQSIQSAQEIEKSLHLIQESLEFIDKQLAAYIADKVDAAQMPQEAQKIQSDLTSHEISLEEMKKHNQGKDANQRVLSQIDVAQKKLQDVSIKFRLFQKPANFEQRLEESKMILDEVKMHLPALETKSVEQEVVQSQLSHCVNLYKSLSEVKSEVEMVIKTGRQIVQKKQTENPKELDERVTALKLHYNELGAKVTERKQQLEKCLKLSRKMRKEMNVLTEWLAATDTELTKRSAVEGMPSNLDSEVAWGKATQKEIEKQKAHLKSVTELGDSLKTVLGKKETLVEDKLTLLNSNWIAVTSRVEEWLNLLLEYQKHMESFDQNVEHITKWIIHTDELLDESEKRKPQQKEDILKRLKAEMNDIRPKVDATRDQAAKLMANRGDYCRKIVEPQISELNRRFAAISHRIKTGKASIPLKELEQFNSDIQKLLEPLEAEIQQGVNLKEEDFNKDMSEDNEGTVNELLQRGDNLQQRITDERKREEIKLKQQLLQTKHNALKDLRSQRRKKALEISHQWYQYKSQADDLLKCLDEIEKKLASLPEPRDERKIKEIDRELQKKKEELNAVRRQAESLSENGAAMAVEPTQIQLSKRWREIESNFAQFRRLNFAQIHTLHEETMVVTTEDMPLDVSYVPSTYLTEISHILQALSEVEQLLNAPELNAKDFEDLFKQEESLKNIKENLQQISGRIDVIHKKKTAALQSATPMERVKLQEAVSQMDFHWEKLNRMYKERQGRFDRSVEKWRHFHYDMKVFNQWLNDVEQFFKKTQNPENWEHAKYKWYLKELQDGIGQRQAVVRTLNATGEEIIQQSSKTDANILQEKLGSLSLRWHEVCKELAERRKRVEEQKNVFSEFQRDLNEFVSWLEEADNIATTPPGDEEQLKEKLEQVKLLTEELPLRQGILKQLNETGGAVLVSAPIRPEEQDKLEKKLKQTNLQWIKVSRALPEKQGELEVHIKDFRQFEEQLDHLLLWLSPIRNQLEIYNQPSQPGPFDLKETEVTVQAKQPDVERLLSKGQHLYKEKPSTQPVKRKLEDLRSEWEAVNHLLWELRTKQPDRAPGLSTTGASASQTVTVVTQPVDTKETVISKLEMPSSLLLEVPALADFNRAWTELTDWLSLLDRVIKSQRVMVGDLEDINEMIIKQKATLQDLEQRRPQLEELITAAQNLKNKTSNQEARTIITDRIERIQIQWDEVQEQLQNRRQQLNEMLKDSTQWLEAKEEAEQVIGQARGKLDSWKEGPHTMDAIQKKITETKQLAKDLRQRQINVDVANDLALKLLRDYSADDTRKVHMITENINTSWGNILKRVSEREAALEETQRLLQQFPLDLEKFLAWITEAETTANVLQDASRKEKLLEDSRGVRELMKPWQDLQGEIEAHTDIYHNLDENGQKILRSLEGSDEAPLLQRRLDNMNFKWSELRKKSLNIRSHLEVSSDQWKRLHLSLQELLVWLQLKDDELSRQAPIGGDFPAVQKQNDVHRAFKRELKTKEPVIMSTLETVRIFLTEQPLEGLEKLYQEPRELPPEERAQNVTRLLRKQAEEVNTEWDKLNLHSADWQRKIDEALERLQELQEAADELDLKLRQAEVIKGSWQPVGDLLIDSLQDHLEKVKALRGEIAPLKENVNHVNDLAHHLTTLGIQLSPYNLSILEDLNTRWRLLQVAVEDRVRQLHEAHRDFGPASQHFLSTSVQGPWERAISPNKVPYYINHETQTTCWDHPKMTELYQSLADLNNVRFSAYRTAMKLRRLQKALCLDLLSLSAACDALDQHNLKQNDQPMDILQIINCLTTIYDRLEQEHNNLVNVPLCVDMCLNWLLNVYDTGRTGRIRVLSFKTGIISLCKAHLEDKYRYLFKQVASSTGFCDQRRLGLLLHDSIQIPRQLGEVASFGGSNIEPSVRSCFQFANNKPEIEAALFLDWMRLEPQSMVWLPVLHRVAAAETAKHQAKCNICKECPIIGFRYRSLKHFNYDICQSCFFSGRVAKGHKMHYPMVEYCTPTTSGEDVRDFAKVLKNKFRTKRYFAKHPRMGYLPVQTVLEGDNMETPVTLINFWPVDSAPASSPQLSHDDTHSRIEHYASRLAEMENSNGSYLNDSISPNESIDDEHLLIQHYCQSLNQDSPLSQPRSPAQILISLESEERGELERILADLEEENRNLQAEYDRLKQQHEHKGLSPLPSPPEMMPTSPQSPRDAELIAEAKLLRQHKGRLEARMQILEDHNKQLESQLHRLRQLLEQPQAEAKVNGTTVSSPSTSLQRSDSSQPMLLRVVGSQTSESMGEEDLLSPPQDTSTGLEEVMEQLNNSFPSSRGRNAPGKPMREDTM.

Positions 1 to 240 are actin-binding; that stretch reads MLWWEEVEDC…YITSLFQVLP (240 aa). Calponin-homology (CH) domains lie at 15–119 and 134–240; these read DVQK…LHWQ and TNSE…QVLP. Residues 63–72 form an ANK2- and ANK-3 binding region; the sequence is PKEKGSTRVH. Spectrin repeat units follow at residues 342–447, 451–557, 560–668, 728–828, 831–935, 944–1046, 1049–1154, 1163–1264, 1268–1464, 1469–1569, 1573–1676, 1680–1777, 1779–1875, 1878–1980, 2001–2098, 2106–2209, 2215–2316, 2317–2415, 2465–2569, 2576–2678, 2682–2786, 2800–2922, and 2927–3032; these read LDSY…SNLH, MDLQ…LLQD, LKWQ…QISQ, DITE…NWLE, NNII…ELQT, RYQE…KLEE, NKLR…EALK, LQKD…TLEE, CWHE…LFQK, EQRL…QLEK, LSRK…NLLL, KHME…TGKA, IPLK…KALE, HQWY…TLHE, YLTE…ERQG, KWRH…RVEE, SEFQ…GELE, VHIK…LRTK, ADFN…QLNE, QWLE…ALEE, LLQQ…KKSL, KRLH…RKID, and RLQE…QLHE. The interaction with SYNM stretch occupies residues 1416 to 1914; sequence SDLTSHEISL…PEPRDERKIK (499 aa). A WW domain is found at 3047–3080; the sequence is TSVQGPWERAISPNKVPYYINHETQTTCWDHPKM. The interaction with SYNM stretch occupies residues 3050 to 3400; sequence QGPWERAISP…TVLEGDNMET (351 aa). The segment at 3300–3356 adopts a ZZ-type; degenerate zinc-finger fold; sequence KHQAKCNICKECPIIGFRYRSLKHFNYDICQSCFFSGRVAKGHKMHYPMVEYCTPTT. Zn(2+)-binding residues include C3305, C3308, C3329, and C3332. Positions 3458–3510 are binds to SNTB1; sequence DDEHLLIQHYCQSLNQDSPLSQPRSPAQILISLESEERGELERILADLEEENR. Phosphoserine is present on residues S3475, S3482, and S3492. 2 disordered regions span residues 3520-3546 and 3595-3677; these read KQQH…QSPR and EAKV…EDTM. Polar residues-rich tracts occupy residues 3599-3618 and 3654-3664; these read NGTT…SSQP and QLNNSFPSSRG. A phosphoserine mark is found at S3604, S3605, S3609, S3615, S3616, and S3658.

In terms of assembly, interacts with SYNM. Interacts with the syntrophins SNTG1 and SNTG2. Interacts with KRT19. Component of the dystrophin-associated glycoprotein complex which is composed of three subcomplexes: a cytoplasmic complex comprised of DMD (or UTRN), DTNA and a number of syntrophins, such as SNTB1, SNTB2, SNTG1 and SNTG2, the transmembrane dystroglycan complex, and the sarcoglycan-sarcospan complex. Interacts with DAG1 (betaDAG1) with DMD; the interaction is inhibited by phosphorylation on the PPXY motif of DAG1. Interacts with SYNM; SNTA1 and SNTB1. Interacts with CMYA5. Directly interacts with ANK2 and ANK3; these interactions do not interfere with betaDAG1-binding and are necessary for proper localization in muscle cells. Identified in a dystroglycan complex that contains at least PRX, DRP2, UTRN, DMD and DAG1. Interacts with DTNB. Interacts with PGM5; the interaction is direct. Interacts with NOS1; localizes NOS1 to sarcolemma in muscle cells. In terms of tissue distribution, strongly expressed in skeletal muscle and weak expression observed in newborn brain which increases in adult brain.

Its subcellular location is the cell membrane. It is found in the sarcolemma. The protein resides in the cytoplasm. The protein localises to the cytoskeleton. It localises to the postsynaptic cell membrane. In terms of biological role, anchors the extracellular matrix to the cytoskeleton via F-actin. Ligand for dystroglycan. Component of the dystrophin-associated glycoprotein complex which accumulates at the neuromuscular junction (NMJ) and at a variety of synapses in the peripheral and central nervous systems and has a structural function in stabilizing the sarcolemma. Also implicated in signaling events and synaptic transmission. The chain is Dystrophin (Dmd) from Rattus norvegicus (Rat).